We begin with the raw amino-acid sequence, 495 residues long: 3-octaprenyl-4-hydroxybenzoate carboxy-lyase (495 aa).

Asparagine 172 lines the Mn(2+) pocket. Residues 175–177, 189–191, and 194–195 contribute to the prenylated FMN site; these read IYR, RWL, and RG. Glutamate 238 is a binding site for Mn(2+). The active-site Proton donor is aspartate 287.

It belongs to the UbiD family. In terms of assembly, homohexamer. Prenylated FMN serves as cofactor. Requires Mn(2+) as cofactor.

It is found in the cell membrane. It carries out the reaction a 4-hydroxy-3-(all-trans-polyprenyl)benzoate + H(+) = a 2-(all-trans-polyprenyl)phenol + CO2. It participates in cofactor biosynthesis; ubiquinone biosynthesis. Its function is as follows. Catalyzes the decarboxylation of 3-octaprenyl-4-hydroxy benzoate to 2-octaprenylphenol, an intermediate step in ubiquinone biosynthesis. The polypeptide is 3-octaprenyl-4-hydroxybenzoate carboxy-lyase (Marinobacter nauticus (strain ATCC 700491 / DSM 11845 / VT8) (Marinobacter aquaeolei)).